We begin with the raw amino-acid sequence, 110 residues long: Large ribosomal subunit protein uL24 (110 aa).

Belongs to the universal ribosomal protein uL24 family. As to quaternary structure, part of the 50S ribosomal subunit.

In terms of biological role, one of two assembly initiator proteins, it binds directly to the 5'-end of the 23S rRNA, where it nucleates assembly of the 50S subunit. Functionally, one of the proteins that surrounds the polypeptide exit tunnel on the outside of the subunit. This Roseiflexus castenholzii (strain DSM 13941 / HLO8) protein is Large ribosomal subunit protein uL24.